Here is a 1051-residue protein sequence, read N- to C-terminus: Exportin-T (1051 aa).

Belongs to the exportin family.

The protein resides in the nucleus. The protein localises to the cytoplasm. Its function is as follows. tRNA nucleus export receptor which facilitates tRNA translocation across the nuclear pore complex. Involved in pre-tRNA splicing, probably by affecting the interaction of pre-tRNA with splicing endonuclease. This is Exportin-T (LOS1) from Eremothecium gossypii (strain ATCC 10895 / CBS 109.51 / FGSC 9923 / NRRL Y-1056) (Yeast).